The primary structure comprises 116 residues: Small ribosomal subunit protein bS16 (116 aa).

Residues 88–116 (RNNPKAAVPGKRMAELAKKKADRAAASAE) form a disordered region. A compositionally biased stretch (basic and acidic residues) spans 99 to 110 (RMAELAKKKADR).

This sequence belongs to the bacterial ribosomal protein bS16 family.

The polypeptide is Small ribosomal subunit protein bS16 (Cereibacter sphaeroides (strain ATCC 17029 / ATH 2.4.9) (Rhodobacter sphaeroides)).